The primary structure comprises 119 residues: Large ribosomal subunit protein uL22 (119 aa).

The protein belongs to the universal ribosomal protein uL22 family. In terms of assembly, part of the 50S ribosomal subunit.

Its function is as follows. This protein binds specifically to 23S rRNA; its binding is stimulated by other ribosomal proteins, e.g. L4, L17, and L20. It is important during the early stages of 50S assembly. It makes multiple contacts with different domains of the 23S rRNA in the assembled 50S subunit and ribosome. In terms of biological role, the globular domain of the protein is located near the polypeptide exit tunnel on the outside of the subunit, while an extended beta-hairpin is found that lines the wall of the exit tunnel in the center of the 70S ribosome. The protein is Large ribosomal subunit protein uL22 of Bifidobacterium animalis subsp. lactis (strain AD011).